The sequence spans 363 residues: Phosrestin-2 (363 aa).

The protein belongs to the arrestin family.

The sequence is that of Phosrestin-2 (ARR1) from Calliphora vicina (Blue blowfly).